We begin with the raw amino-acid sequence, 354 residues long: NADH-quinone oxidoreductase subunit H (354 aa).

Transmembrane regions (helical) follow at residues 25–45 (LVRI…LILW), 91–111 (WLYL…WAVI), 126–146 (LLYA…AGWA), 170–190 (MGFA…SEIV), 205–225 (FLSW…ISGI), 253–273 (MAFA…SALA), 290–310 (FIPG…VFIW), and 330–350 (VFLP…MSPL).

It belongs to the complex I subunit 1 family. NDH-1 is composed of 14 different subunits. Subunits NuoA, H, J, K, L, M, N constitute the membrane sector of the complex.

The protein localises to the cell inner membrane. It carries out the reaction a quinone + NADH + 5 H(+)(in) = a quinol + NAD(+) + 4 H(+)(out). In terms of biological role, NDH-1 shuttles electrons from NADH, via FMN and iron-sulfur (Fe-S) centers, to quinones in the respiratory chain. The immediate electron acceptor for the enzyme in this species is believed to be ubiquinone. Couples the redox reaction to proton translocation (for every two electrons transferred, four hydrogen ions are translocated across the cytoplasmic membrane), and thus conserves the redox energy in a proton gradient. This subunit may bind ubiquinone. This chain is NADH-quinone oxidoreductase subunit H, found in Burkholderia thailandensis (strain ATCC 700388 / DSM 13276 / CCUG 48851 / CIP 106301 / E264).